Here is a 1721-residue protein sequence, read N- to C-terminus: Ras guanine nucleotide exchange factor R (1721 aa).

A coiled-coil region spans residues 148-279 (QLEDEVDLVH…LQQQQQQQRS (132 aa)). Disordered stretches follow at residues 213–232 (QQQKHQEEKEKNDQKEKEEK), 445–515 (SSLG…NQQP), 551–701 (ATTT…VDKQ), 716–766 (RTPL…KSPS), 797–837 (TITI…TPNK), and 929–981 (DEVS…DPVS). A compositionally biased stretch (basic and acidic residues) spans 216 to 232 (KHQEEKEKNDQKEKEEK). 4 stretches are compositionally biased toward low complexity: residues 454-469 (SPEKSISPSFTSSTSE), 479-493 (HNNNNNNYNNSSTNN), 501-515 (PSLSSNHSQQPNQQP), and 551-581 (ATTTTTTATSPSTSTSTSTSTSPNSSSLSIS). The span at 618–627 (NGTTSPRNNE) shows a compositional bias: polar residues. Low complexity-rich tracts occupy residues 628–651 (SSVTAATTTTTSTTASITTNVNTI) and 663–686 (TPTTGTPSTSTPTPQTPTSTSQND). Positions 687–701 (KQNENNNKENFVDKQ) are enriched in basic and acidic residues. Low complexity-rich tracts occupy residues 724–748 (SSNSSSPSNNSNTTNSSSHSSTNSS), 797–836 (TITINNNNNNNNNNNNNNNNNNNNIQQQQQQQQQIPTTPN), and 933–952 (ESSSSSSSSTTSPNNINTPS). The stretch at 802 to 831 (NNNNNNNNNNNNNNNNNNNIQQQQQQQQQI) forms a coiled coil. The segment covering 968-978 (NLSSINNSSYD) has biased composition (polar residues). Residues 1291–1411 (GRYVPKAGTL…ILGGLIKKKE (121 aa)) form the N-terminal Ras-GEF domain. Residues 1447–1676 (NESEIARQLT…YQLSLIREPR (230 aa)) enclose the Ras-GEF domain.

In terms of processing, phosphorylated on threonine residues.

Its function is as follows. Promotes the exchange of Ras-bound GDP by GTP. May also play a role in the activation of rasG. This Dictyostelium discoideum (Social amoeba) protein is Ras guanine nucleotide exchange factor R (gefR).